The primary structure comprises 165 residues: MRPLILGLATAAATLVLDQATKLGLLLLADLPARQPVVLAPFAQLVVVWNRGVSYGLFQQHTELGRWLLVGVAVLAAAALGAWMARAGSRLLVLSLGLIVGGAVGNAVDRVAYGAVFDFVHLHAGGWSWYVFNVADAGIVAGVAGLLVETVWSEARGDAAMRPDG.

2 consecutive transmembrane segments (helical) span residues 64–84 and 88–108; these read LGRWLLVGVAVLAAAALGAWM and GSRLLVLSLGLIVGGAVGNAV. Active-site residues include D118 and D136. Residues 128-148 traverse the membrane as a helical segment; sequence SWYVFNVADAGIVAGVAGLLV.

This sequence belongs to the peptidase A8 family.

It is found in the cell inner membrane. The catalysed reaction is Release of signal peptides from bacterial membrane prolipoproteins. Hydrolyzes -Xaa-Yaa-Zaa-|-(S,diacylglyceryl)Cys-, in which Xaa is hydrophobic (preferably Leu), and Yaa (Ala or Ser) and Zaa (Gly or Ala) have small, neutral side chains.. It participates in protein modification; lipoprotein biosynthesis (signal peptide cleavage). Functionally, this protein specifically catalyzes the removal of signal peptides from prolipoproteins. In Methylobacterium sp. (strain 4-46), this protein is Lipoprotein signal peptidase.